We begin with the raw amino-acid sequence, 400 residues long: Opsin-3 (400 aa).

At 1-38 (MYSGNRSGDQGYWEDGAGAEGAAPAGTRSPAPLFSPTA) the chain is on the extracellular side. Asn5 is a glycosylation site (N-linked (GlcNAc...) asparagine). The chain crosses the membrane as a helical span at residues 39 to 63 (YERLALLLGCLALLGVGGNLLVLLL). Topologically, residues 64–75 (YSKFPRLRTPTH) are cytoplasmic. A helical membrane pass occupies residues 76–100 (LFLVNLSLGDLLVSLFGVTFTFASC). Over 101–115 (LRNGWVWDAVGCAWD) the chain is Extracellular. Residues Cys112 and Cys186 are joined by a disulfide bond. The helical transmembrane segment at 116-135 (GFSGSLFGFVSITTLTVLAY) threads the bilayer. Topologically, residues 136-151 (ERYIRVVHARVINFSW) are cytoplasmic. A helical transmembrane segment spans residues 152–175 (AWRAITYIWLYSLAWAGAPLLGWN). At 176–199 (RYILDIHGLGCTVDWRSKDANDSS) the chain is on the extracellular side. Asn196 carries an N-linked (GlcNAc...) asparagine glycan. Residues 200 to 227 (FVLFLFLGCLVVPVGIIAHCYGHILYSV) form a helical membrane-spanning segment. Over 228 to 253 (RMLRCVEDLQTIQVIKMLRYEKKVAK) the chain is Cytoplasmic. Residues 254–277 (MCFLMAFVFLTCWMPYIVTRFLVV) traverse the membrane as a helical segment. The Extracellular portion of the chain corresponds to 278-285 (NGYGHLVT). Residues 286–310 (PTVSIVSYLFAKSSTVYNPVIYIFM) traverse the membrane as a helical segment. Lys297 is subject to N6-(retinylidene)lysine. The Cytoplasmic segment spans residues 311–400 (NRKFRRSLLQ…KVDVIQVRPL (90 aa)). Cys323 carries S-palmitoyl cysteine lipidation.

This sequence belongs to the G-protein coupled receptor 1 family. Opsin subfamily. In terms of assembly, interacts with MC1R; the interaction results in a decrease in MC1R-mediated cAMP signaling and ultimately a decrease in melanin production in melanocytes. As to expression, expressed in the eye (at protein level). Expressed in tracheal airway smooth muscle. Expressed in brown adipocyte tissue; expression becomes more abundant during differentiation. Strongly expressed in brain. Highly expressed in the preoptic area and paraventricular nucleus of the hypothalamus. Shows highly patterned expression in other regions of the brain, being enriched in selected regions of the cerebral cortex, cerebellar Purkinje cells, a subset of striatal neurons, selected thalamic nuclei, and a subset of interneurons in the ventral horn of the spinal cord.

The protein localises to the cell membrane. It localises to the cytoplasm. In terms of biological role, G-protein coupled receptor which selectively activates G proteins via ultraviolet A (UVA) light-mediated activation in the skin. Binds both 11-cis retinal and all-trans retinal. Regulates melanogenesis in melanocytes via inhibition of alpha-MSH-induced MC1R-mediated cAMP signaling, modulation of calcium flux, regulation of CAMK2 phosphorylation, and subsequently phosphorylation of CREB, p38, ERK and MITF in response to blue light. Plays a role in melanocyte survival through regulation of intracellular calcium levels and subsequent BCL2/RAF1 signaling. Additionally regulates apoptosis via cytochrome c release and subsequent activation of the caspase cascade. Required for TYR and DCT blue light-induced complex formation in melanocytes. Involved in keratinocyte differentiation in response to blue-light. Required for the UVA-mediated induction of calcium and mitogen-activated protein kinase signaling resulting in the expression of MMP1, MMP2, MMP3, MMP9 and TIMP1 in dermal fibroblasts. Plays a role in light-mediated glucose uptake, mitochondrial respiration and fatty acid metabolism in brown adipocyte tissues. May be involved in photorelaxation of airway smooth muscle cells, via blue-light dependent GPCR signaling pathways. The sequence is that of Opsin-3 (Opn3) from Mus musculus (Mouse).